The sequence spans 261 residues: MELKIGRAIIKHGLEDLYEYSDVDVAIVGAGPAGLTAARYLAERGFKVLVFERRFSFGGGIGPGGNMIPKIVVQEEALPILKDFKVRFKPAGDGLYTVDPAELIAKLAAGAIDAGAKILLGVHVDDVIFRGDPPRVAGLLWIWTPIQMSGMHVDPLYTQAKAVIDATGHDAEVVSVAARKVPELGLQLQGEKSAWSEVSEKLVVEHTGRVAPGLYVAGIAVCAVYGLPRMGPIFGGMLMSGRKVAEVVAKDLAEVAYAVRA.

Residues alanine 33, glutamate 52–arginine 53, glycine 60, valine 124, and histidine 152–aspartate 154 contribute to the NAD(+) site. Aspartate 154 and histidine 169 together coordinate Fe cation. Isoleucine 219 lines the NAD(+) pocket. Arginine 229 contributes to the glycine binding site.

The protein belongs to the THI4 family. In terms of assembly, homooctamer; tetramer of dimers. The cofactor is Fe(2+).

The catalysed reaction is hydrogen sulfide + glycine + NAD(+) = ADP-5-ethyl-4-methylthiazole-2-carboxylate + nicotinamide + 3 H2O + H(+). It participates in cofactor biosynthesis; thiamine diphosphate biosynthesis. In terms of biological role, involved in the biosynthesis of the thiazole moiety of thiamine. Catalyzes the conversion of NAD and glycine to adenosine diphosphate 5-(2-hydroxyethyl)-4-methylthiazole-2-carboxylate (ADT), an adenylated thiazole intermediate, using free sulfide as a source of sulfur. This chain is Thiamine thiazole synthase, found in Pyrobaculum calidifontis (strain DSM 21063 / JCM 11548 / VA1).